Consider the following 436-residue polypeptide: UPF0597 protein YhaM (436 aa).

Belongs to the UPF0597 family.

The sequence is that of UPF0597 protein YhaM from Salmonella choleraesuis (strain SC-B67).